We begin with the raw amino-acid sequence, 117 residues long: Ribosome-binding factor A (117 aa).

This sequence belongs to the RbfA family. Monomer. Binds 30S ribosomal subunits, but not 50S ribosomal subunits or 70S ribosomes.

It localises to the cytoplasm. Its function is as follows. One of several proteins that assist in the late maturation steps of the functional core of the 30S ribosomal subunit. Associates with free 30S ribosomal subunits (but not with 30S subunits that are part of 70S ribosomes or polysomes). Required for efficient processing of 16S rRNA. May interact with the 5'-terminal helix region of 16S rRNA. This Bacillus licheniformis (strain ATCC 14580 / DSM 13 / JCM 2505 / CCUG 7422 / NBRC 12200 / NCIMB 9375 / NCTC 10341 / NRRL NRS-1264 / Gibson 46) protein is Ribosome-binding factor A.